A 198-amino-acid polypeptide reads, in one-letter code: MTEHCASDISDVSCPPRGRVIVGVVLGLAGTGALIGGLWAWIAPPIHAVVGLTRTGERGHDYLGNESEHFFVAPCLMLGLLTVLAVTASVLAWQLRQHRGPGMVIGLAIGLMICAATAAAVGALLVWMRYGALNFDAVPLSYDHKVAHVIQAPPVFFAHGLLQVAATVLWPAGIAALVYAVLAAANGRDDLGGRLCSR.

Transmembrane regions (helical) follow at residues 20–40, 70–90, 107–127, and 164–184; these read VIVGVVLGLAGTGALIGGLWA, FFVAPCLMLGLLTVLAVTASV, LAIGLMICAATAAAVGALLVW, and VAATVLWPAGIAALVYAVLAA.

This sequence to M.tuberculosis Rv1591.

It is found in the cell membrane. This is an uncharacterized protein from Mycobacterium leprae (strain TN).